Reading from the N-terminus, the 159-residue chain is Large ribosomal subunit protein uL10 (159 aa).

Belongs to the universal ribosomal protein uL10 family. As to quaternary structure, part of the ribosomal stalk of the 50S ribosomal subunit. The N-terminus interacts with L11 and the large rRNA to form the base of the stalk. The C-terminus forms an elongated spine to which L12 dimers bind in a sequential fashion forming a multimeric L10(L12)X complex.

Forms part of the ribosomal stalk, playing a central role in the interaction of the ribosome with GTP-bound translation factors. This is Large ribosomal subunit protein uL10 (rplJ) from Campylobacter jejuni subsp. jejuni serotype O:2 (strain ATCC 700819 / NCTC 11168).